The primary structure comprises 270 residues: uncharacterized protein (270 aa).

The protein belongs to the GSP E family.

This is an uncharacterized protein from Methanocaldococcus jannaschii (strain ATCC 43067 / DSM 2661 / JAL-1 / JCM 10045 / NBRC 100440) (Methanococcus jannaschii).